The primary structure comprises 397 residues: pH-sensitive adenylate cyclase MT1302 (397 aa).

The tract at residues 1-191 (MTDHVREADD…IQDMLFMQLR (191 aa)) is regulatory domain. The interval 192-206 (HMMETEAVNAGERAA) is linker. The segment at 211 to 397 (PGARQVTVAF…QDDDLAGSSP (187 aa)) is catalytic domain. Positions 217–325 (TVAFADLVGF…SPVNVASRVT (109 aa)) constitute a Guanylate cyclase domain. Asp-222 serves as a coordination point for Mn(2+). Lys-261 lines the substrate pocket. Asp-265 is a binding site for Mn(2+). Arg-298 is an ATP binding site. A substrate-binding site is contributed by Asp-312.

Belongs to the adenylyl cyclase class-4/guanylyl cyclase family. In terms of assembly, homodimer. Mn(2+) is required as a cofactor. The cofactor is Mg(2+).

It carries out the reaction ATP = 3',5'-cyclic AMP + diphosphate. Its function is as follows. Catalyzes the formation of the second messenger cAMP. This chain is pH-sensitive adenylate cyclase MT1302, found in Mycobacterium tuberculosis (strain CDC 1551 / Oshkosh).